The sequence spans 115 residues: METTAVLRGVRLSEQKGRLVADQIRGLPVERALNLLAFSPKKAAVIIRKLLESAIANAEHNEGADIDELKVSRIYVDRGPSLMRTSARAKGRGNRIVKPTCHILLTVGDKASNKK.

This sequence belongs to the universal ribosomal protein uL22 family. Part of the 50S ribosomal subunit.

This protein binds specifically to 23S rRNA; its binding is stimulated by other ribosomal proteins, e.g. L4, L17, and L20. It is important during the early stages of 50S assembly. It makes multiple contacts with different domains of the 23S rRNA in the assembled 50S subunit and ribosome. In terms of biological role, the globular domain of the protein is located near the polypeptide exit tunnel on the outside of the subunit, while an extended beta-hairpin is found that lines the wall of the exit tunnel in the center of the 70S ribosome. This chain is Large ribosomal subunit protein uL22, found in Nitrosospira multiformis (strain ATCC 25196 / NCIMB 11849 / C 71).